The chain runs to 615 residues: Dihydroxy-acid dehydratase (615 aa).

Residue D83 participates in Mg(2+) binding. Residue C124 participates in [2Fe-2S] cluster binding. Mg(2+)-binding residues include D125 and K126. K126 bears the N6-carboxylysine mark. [2Fe-2S] cluster is bound at residue C199. E495 is a binding site for Mg(2+). The active-site Proton acceptor is S521.

The protein belongs to the IlvD/Edd family. As to quaternary structure, homodimer. [2Fe-2S] cluster is required as a cofactor. It depends on Mg(2+) as a cofactor.

The enzyme catalyses (2R)-2,3-dihydroxy-3-methylbutanoate = 3-methyl-2-oxobutanoate + H2O. It catalyses the reaction (2R,3R)-2,3-dihydroxy-3-methylpentanoate = (S)-3-methyl-2-oxopentanoate + H2O. It participates in amino-acid biosynthesis; L-isoleucine biosynthesis; L-isoleucine from 2-oxobutanoate: step 3/4. Its pathway is amino-acid biosynthesis; L-valine biosynthesis; L-valine from pyruvate: step 3/4. Its function is as follows. Functions in the biosynthesis of branched-chain amino acids. Catalyzes the dehydration of (2R,3R)-2,3-dihydroxy-3-methylpentanoate (2,3-dihydroxy-3-methylvalerate) into 2-oxo-3-methylpentanoate (2-oxo-3-methylvalerate) and of (2R)-2,3-dihydroxy-3-methylbutanoate (2,3-dihydroxyisovalerate) into 2-oxo-3-methylbutanoate (2-oxoisovalerate), the penultimate precursor to L-isoleucine and L-valine, respectively. The polypeptide is Dihydroxy-acid dehydratase (Corynebacterium jeikeium (strain K411)).